The primary structure comprises 73 residues: Disintegrin molossin (73 aa).

Residues 1–73 enclose the Disintegrin domain; the sequence is EAGIECDCGS…ADCPRNRFHA (73 aa). 6 disulfides stabilise this stretch: cysteine 6–cysteine 21, cysteine 8–cysteine 16, cysteine 15–cysteine 38, cysteine 29–cysteine 35, cysteine 34–cysteine 59, and cysteine 47–cysteine 66. The Cell attachment site signature appears at 51-53; that stretch reads RGD.

Belongs to the venom metalloproteinase (M12B) family. P-II subfamily. P-IIa sub-subfamily. Monomer (disintegrin). In terms of tissue distribution, expressed by the venom gland.

The protein resides in the secreted. Inhibits fibrinogen interaction with platelets. Acts by binding to alpha-IIb/beta-3 (ITGA2B/ITGB3) on the platelet surface and inhibits aggregation induced by ADP, thrombin, platelet-activating factor and collagen. The protein is Disintegrin molossin of Crotalus molossus molossus (Northern black-tailed rattlesnake).